We begin with the raw amino-acid sequence, 477 residues long: Bifunctional protein HldE (477 aa).

Residues 1–320 (MKDSLPAFEK…SLSDTHHSET (320 aa)) form a ribokinase region. 195 to 198 (NLHE) contacts ATP. D264 is a catalytic residue. The segment at 346-477 (MTNGCFDILH…KIIENIMANQ (132 aa)) is cytidylyltransferase.

The protein in the N-terminal section; belongs to the carbohydrate kinase PfkB family. This sequence in the C-terminal section; belongs to the cytidylyltransferase family. In terms of assembly, homodimer.

The enzyme catalyses D-glycero-beta-D-manno-heptose 7-phosphate + ATP = D-glycero-beta-D-manno-heptose 1,7-bisphosphate + ADP + H(+). It carries out the reaction D-glycero-beta-D-manno-heptose 1-phosphate + ATP + H(+) = ADP-D-glycero-beta-D-manno-heptose + diphosphate. Its pathway is nucleotide-sugar biosynthesis; ADP-L-glycero-beta-D-manno-heptose biosynthesis; ADP-L-glycero-beta-D-manno-heptose from D-glycero-beta-D-manno-heptose 7-phosphate: step 1/4. It functions in the pathway nucleotide-sugar biosynthesis; ADP-L-glycero-beta-D-manno-heptose biosynthesis; ADP-L-glycero-beta-D-manno-heptose from D-glycero-beta-D-manno-heptose 7-phosphate: step 3/4. Catalyzes the phosphorylation of D-glycero-D-manno-heptose 7-phosphate at the C-1 position to selectively form D-glycero-beta-D-manno-heptose-1,7-bisphosphate. In terms of biological role, catalyzes the ADP transfer from ATP to D-glycero-beta-D-manno-heptose 1-phosphate, yielding ADP-D-glycero-beta-D-manno-heptose. This Shewanella piezotolerans (strain WP3 / JCM 13877) protein is Bifunctional protein HldE.